The sequence spans 320 residues: uncharacterized protein (320 aa).

7 helical membrane passes run 107–127 (LSKE…AGIY), 131–151 (VALL…IALS), 169–189 (LIAE…YLPI), 200–220 (ITLD…GSLS), 228–248 (IAVG…FGLL), 260–280 (ALIL…VIFS), and 299–319 (TLYA…LIIY).

The protein resides in the cell membrane. This is an uncharacterized protein from Methanocaldococcus jannaschii (strain ATCC 43067 / DSM 2661 / JAL-1 / JCM 10045 / NBRC 100440) (Methanococcus jannaschii).